The chain runs to 259 residues: MTRLQNAFSKPHAAFVAFITAGDGDTAANLDALVAGGADVIELGMPFTDPMADGPAIQAANIRSLARGTTTRDVLMIANEFRERHPEVPLVLMGYANPMVRRGPEWFAAECKGCGVDGVICVDIPPEEDAELGPALRAAGIAPIRLATPTTDAKRLPAVLEGCEGFVYYVSVAGITGKQQAALDTIESNVARIKRSTDLPVAVGFGVRTPEQAGAIARVADGVVVGSALVELVGEFGTEAPAKLQELTKALADAVHSAR.

Active-site proton acceptor residues include E42 and D53.

This sequence belongs to the TrpA family. Tetramer of two alpha and two beta chains.

The enzyme catalyses (1S,2R)-1-C-(indol-3-yl)glycerol 3-phosphate + L-serine = D-glyceraldehyde 3-phosphate + L-tryptophan + H2O. Its pathway is amino-acid biosynthesis; L-tryptophan biosynthesis; L-tryptophan from chorismate: step 5/5. Functionally, the alpha subunit is responsible for the aldol cleavage of indoleglycerol phosphate to indole and glyceraldehyde 3-phosphate. The sequence is that of Tryptophan synthase alpha chain from Erythrobacter litoralis (strain HTCC2594).